A 377-amino-acid chain; its full sequence is Probable tRNA pseudouridine synthase D (377 aa).

The active-site Nucleophile is the Asp89. The region spanning 160–377 (YLPAFIGYQR…ILRGDPRKFT (218 aa)) is the TRUD domain.

This sequence belongs to the pseudouridine synthase TruD family.

The enzyme catalyses uridine(13) in tRNA = pseudouridine(13) in tRNA. Could be responsible for synthesis of pseudouridine from uracil-13 in transfer RNAs. The sequence is that of Probable tRNA pseudouridine synthase D from Saccharolobus solfataricus (strain ATCC 35092 / DSM 1617 / JCM 11322 / P2) (Sulfolobus solfataricus).